Here is a 201-residue protein sequence, read N- to C-terminus: Small ribosomal subunit protein uS4c (201 aa).

Residues 15 to 43 are disordered; it reads LGALPGLTSKRPSPGSDLRNQSRSGKRSQ. An S4 RNA-binding domain is found at 89–150; it reads MRLDNILFRL…EQRSRALIQK (62 aa).

Belongs to the universal ribosomal protein uS4 family. As to quaternary structure, part of the 30S ribosomal subunit. Contacts protein S5. The interaction surface between S4 and S5 is involved in control of translational fidelity.

Its subcellular location is the plastid. It is found in the chloroplast. In terms of biological role, one of the primary rRNA binding proteins, it binds directly to 16S rRNA where it nucleates assembly of the body of the 30S subunit. Functionally, with S5 and S12 plays an important role in translational accuracy. The chain is Small ribosomal subunit protein uS4c (rps4) from Ceratophyllum demersum (Rigid hornwort).